Here is a 261-residue protein sequence, read N- to C-terminus: uncharacterized protein (261 aa).

The region spanning 135-261 (LVLKRIDEDI…VTEYTIYYSG (127 aa)) is the N-acetyltransferase domain.

It belongs to the acetyltransferase family.

This is an uncharacterized protein from Bacillus subtilis (strain 168).